The chain runs to 156 residues: ATP synthase subunit b (156 aa).

Residues 5 to 25 (LTMIGQAIAFFIFVVFCMKYV) traverse the membrane as a helical segment.

Belongs to the ATPase B chain family. As to quaternary structure, F-type ATPases have 2 components, F(1) - the catalytic core - and F(0) - the membrane proton channel. F(1) has five subunits: alpha(3), beta(3), gamma(1), delta(1), epsilon(1). F(0) has three main subunits: a(1), b(2) and c(10-14). The alpha and beta chains form an alternating ring which encloses part of the gamma chain. F(1) is attached to F(0) by a central stalk formed by the gamma and epsilon chains, while a peripheral stalk is formed by the delta and b chains.

The protein localises to the cell inner membrane. Functionally, f(1)F(0) ATP synthase produces ATP from ADP in the presence of a proton or sodium gradient. F-type ATPases consist of two structural domains, F(1) containing the extramembraneous catalytic core and F(0) containing the membrane proton channel, linked together by a central stalk and a peripheral stalk. During catalysis, ATP synthesis in the catalytic domain of F(1) is coupled via a rotary mechanism of the central stalk subunits to proton translocation. Its function is as follows. Component of the F(0) channel, it forms part of the peripheral stalk, linking F(1) to F(0). The protein is ATP synthase subunit b of Hahella chejuensis (strain KCTC 2396).